A 143-amino-acid chain; its full sequence is Transcriptional regulator MraZ (143 aa).

2 SpoVT-AbrB domains span residues 5-47 and 76-119; these read TFTP…PREE and ADEQ…DAQA.

The protein belongs to the MraZ family. As to quaternary structure, forms oligomers.

It localises to the cytoplasm. Its subcellular location is the nucleoid. The protein is Transcriptional regulator MraZ of Corynebacterium urealyticum (strain ATCC 43042 / DSM 7109).